The chain runs to 85 residues: Conotoxin Lv15a (85 aa).

The first 23 residues, 1-23 (MEKLTVLILVATVLLMIQVLAQS), serve as a signal peptide directing secretion. A propeptide spanning residues 24–49 (GGDKHLKRRPKQYATKRLSALMRGHR) is cleaved from the precursor. Q50 carries the pyrrolidone carboxylic acid modification.

This sequence belongs to the conotoxin O2 superfamily. Post-translationally, contains 4 disulfide bonds. Expressed by the venom duct.

Its subcellular location is the secreted. This is Conotoxin Lv15a from Conus lividus (Livid cone).